The sequence spans 308 residues: Carnitine transport binding protein OpuCC (308 aa).

A signal peptide spans 1–22 (MKKKFIALFSVLLLTSSLFLSS). Cys23 carries the N-palmitoyl cysteine lipid modification. A lipid anchor (S-diacylglycerol cysteine) is attached at Cys23.

This sequence belongs to the OsmX family. As to quaternary structure, the complex is composed of two ATP-binding proteins (OpuCA), two transmembrane proteins (OpuCB and OpuCD) and a solute-binding protein (OpuCC).

It localises to the cell membrane. Functionally, part of the ABC transporter complex OpuCABCD involved in carnitine uptake. Involved, with BetL and GbuABC, in osmoprotection and cryoprotection of Listeria. Can also mediate weak glycine betaine transport. The polypeptide is Carnitine transport binding protein OpuCC (opuCC) (Listeria monocytogenes serotype 1/2a (strain 10403S)).